We begin with the raw amino-acid sequence, 339 residues long: MTIQKNWQELIRPNKLVVTPGSDPTRFATLVAEPLERGFGQTLGNALRRVLLSSLQGAAVQSVHIDGVLHEFSSIAGVREDVTDIVLNIKDISIKMQGEGPKRMVVKKQGPGTVTAGDIQTVGDVVVLNPDLQICTLDEGAEIRMEFTVAGGKGYVAAERNRPEDAPIGLIPVDSLFSPVRKVSYKVENTREGQILDYDKLTMTIETNGAISPDDAVAYAARILQDQLNVFVNFEEPRKEVTQEIIPDLAFNPAFLKKVDELELSVRSANCLKNDNIVYIGDLVQKSEAEMLRTPNFGRKSLNEIKEVLAQMGLHLGMEVPGWPPENIDELAKRFEDHY.

Residues 1–235 (MTIQKNWQEL…DQLNVFVNFE (235 aa)) are alpha N-terminal domain (alpha-NTD). Residues 251 to 339 (FNPAFLKKVD…ELAKRFEDHY (89 aa)) are alpha C-terminal domain (alpha-CTD).

Belongs to the RNA polymerase alpha chain family. Homodimer. The RNAP catalytic core consists of 2 alpha, 1 beta, 1 beta' and 1 omega subunit. When a sigma factor is associated with the core the holoenzyme is formed, which can initiate transcription.

The catalysed reaction is RNA(n) + a ribonucleoside 5'-triphosphate = RNA(n+1) + diphosphate. In terms of biological role, DNA-dependent RNA polymerase catalyzes the transcription of DNA into RNA using the four ribonucleoside triphosphates as substrates. The chain is DNA-directed RNA polymerase subunit alpha from Rhodopseudomonas palustris (strain BisB18).